A 340-amino-acid chain; its full sequence is Fructose-1,6-bisphosphatase class 1 (340 aa).

The Mg(2+) site is built by glutamate 107, aspartate 126, leucine 128, and aspartate 129. Asparagine 215 contributes to the substrate binding site. Glutamate 287 provides a ligand contact to Mg(2+).

This sequence belongs to the FBPase class 1 family. Homotetramer. It depends on Mg(2+) as a cofactor.

The protein resides in the cytoplasm. It catalyses the reaction beta-D-fructose 1,6-bisphosphate + H2O = beta-D-fructose 6-phosphate + phosphate. The protein operates within carbohydrate biosynthesis; gluconeogenesis. The sequence is that of Fructose-1,6-bisphosphatase class 1 from Brucella anthropi (strain ATCC 49188 / DSM 6882 / CCUG 24695 / JCM 21032 / LMG 3331 / NBRC 15819 / NCTC 12168 / Alc 37) (Ochrobactrum anthropi).